Reading from the N-terminus, the 167-residue chain is Calcium-binding protein CML19 (167 aa).

EF-hand domains follow at residues 23–58 (QKRR…LGFE), 59–94 (MNNQ…KFGE), 96–131 (DSID…LGEN), and 132–167 (FTDN…TSYG). The Ca(2+) site is built by Asp-36, Asp-38, Ser-40, Ser-42, Glu-47, Asp-72, Asn-74, Ser-76, Glu-83, Asp-109, Asp-111, Asn-113, Lys-115, Asp-120, Asp-145, Asp-147, Asp-149, Glu-151, and Glu-156.

Belongs to the centrin family. As to quaternary structure, interacts with RAD4. Calcium is required for this interaction. Interacts with SAC3B. As to expression, expressed in leaves, roots, and at lower level in stems. Barely detectable in flower buds and flowers.

The protein localises to the cytoplasm. Its subcellular location is the nucleus. Potential calcium sensor that binds calcium in vitro. Modulates homologous recombination and nucleotide excision repair (NER). Involved in the early response to UV irradiation. The polypeptide is Calcium-binding protein CML19 (Arabidopsis thaliana (Mouse-ear cress)).